A 675-amino-acid chain; its full sequence is G-protein-signaling modulator 1 (675 aa).

A mediates association with membranes region spans residues 1–509 (MAGPAPPVAD…DLLTKFQSSR (509 aa)). TPR repeat units lie at residues 28–61 (CLELALEGERLCKAGDFKTGVAFFEAAVQVGTED), 66–99 (SAIYSQLGNAYFYLKEHGRALEYHKHDLLLARTI), 106–139 (AKASGNLGNTLKVLGRFDEAAVCCQRHLSIAQEQ), 146–181 (ARALYNIGNVYHAKGKQLSWNAANATQDPGHLPPDV), 183–202 (ETLCKASEFYERNLSLVKEL), 209–242 (GRAYGNLGNTHYLLGNFTEATTFHKERLAIAKEF), 249–282 (RRAYSNLGNAHVFLGRFDVAAEYYKKTLQLSRQL), 289–322 (AQACYSLGNTYTLLQDYERAAEYHLRHLLIAQEL), and 329–362 (GRACWSLGNAYVSMGRPAQALTFAKKHLQISQEI). The segment at 364–487 (DRHGELTARM…VRVHVPRTSI (124 aa)) is interaction with STK11/LKB1. The disordered stretch occupies residues 391–412 (SEKPDLAGYEAQGARPKRTQRL). At serine 413 the chain carries Phosphoserine. Omega-N-methylarginine is present on arginine 421. The segment covering 424 to 442 (LEREQNGDSHHSGDWRGPS) has biased composition (basic and acidic residues). The disordered stretch occupies residues 424–492 (LEREQNGDSH…PRTSIPRAPS (69 aa)). 5 positions are modified to phosphoserine: serine 445, serine 469, serine 471, serine 492, and serine 493. A compositionally biased stretch (basic and acidic residues) spans 454–469 (KYQEGPDAERRPREGS). The region spanning 495 to 517 (EECFFDLLTKFQSSRMDDQRCPL) is the GoLoco 1 domain. A phosphoserine mark is found at serine 545 and serine 569. 3 consecutive GoLoco domains span residues 548 to 570 (TEEFFDLIASSQSRRLDDQRASV), 596 to 618 (GDDFFNMLIKYQSSRIDDQRCPP), and 630 to 652 (DEDFFSLIQRVQAKRMDEQRVDL). Disordered stretches follow at residues 610–630 (RIDDQRCPPPDVLPRGPTMPD) and 644–675 (RMDEQRVDLAGGPEQGAGGPPEPQQQCQPGAS).

This sequence belongs to the GPSM family. Interacts with GNAI1, GNAI2 and GNAI3 preferentially in their GDP-bound state. May also interact with GNAO1. Interacts with STK11/LKB1 and MACF1. Interacts with INSC/inscuteable and FRMPD1. Post-translationally, phosphorylation regulates interaction with G(i/o) alpha. In terms of tissue distribution, expressed in intestinal cells.

It is found in the cytoplasm. It localises to the cytosol. The protein localises to the endoplasmic reticulum membrane. The protein resides in the golgi apparatus membrane. Its subcellular location is the cell membrane. Its function is as follows. Guanine nucleotide dissociation inhibitor (GDI) which functions as a receptor-independent activator of heterotrimeric G-protein signaling. Keeps G(i/o) alpha subunit in its GDP-bound form thus uncoupling heterotrimeric G-proteins signaling from G protein-coupled receptors. Controls spindle orientation and asymmetric cell fate of cerebral cortical progenitors. May also be involved in macroautophagy in intestinal cells. May play a role in drug addiction. The protein is G-protein-signaling modulator 1 (GPSM1) of Homo sapiens (Human).